A 335-amino-acid chain; its full sequence is Anthranilate phosphoribosyltransferase (335 aa).

5-phospho-alpha-D-ribose 1-diphosphate contacts are provided by residues G79, 82–83, S87, 89–92, 107–115, and S119; these read GD, NIST, and KHGNRSISS. G79 contributes to the anthranilate binding site. S91 provides a ligand contact to Mg(2+). N110 provides a ligand contact to anthranilate. R165 contacts anthranilate. D224 and E225 together coordinate Mg(2+).

The protein belongs to the anthranilate phosphoribosyltransferase family. Homodimer. It depends on Mg(2+) as a cofactor.

The enzyme catalyses N-(5-phospho-beta-D-ribosyl)anthranilate + diphosphate = 5-phospho-alpha-D-ribose 1-diphosphate + anthranilate. Its pathway is amino-acid biosynthesis; L-tryptophan biosynthesis; L-tryptophan from chorismate: step 2/5. Its function is as follows. Catalyzes the transfer of the phosphoribosyl group of 5-phosphorylribose-1-pyrophosphate (PRPP) to anthranilate to yield N-(5'-phosphoribosyl)-anthranilate (PRA). The chain is Anthranilate phosphoribosyltransferase from Streptococcus mutans serotype c (strain ATCC 700610 / UA159).